Here is a 789-residue protein sequence, read N- to C-terminus: Phenylalanine--tRNA ligase beta subunit (789 aa).

The region spanning 38-151 (KKHLQSFVVV…NTYNVGESFF (114 aa)) is the tRNA-binding domain. A B5 domain is found at 398 to 474 (HNDILLNFSP…RLYGYDKILE (77 aa)). Residues aspartate 452, aspartate 458, glutamate 461, and glutamate 462 each contribute to the Mg(2+) site. Residues 694 to 787 (LRYQSVKRDF…ISKGFNGILR (94 aa)) form the FDX-ACB domain.

This sequence belongs to the phenylalanyl-tRNA synthetase beta subunit family. Type 1 subfamily. In terms of assembly, tetramer of two alpha and two beta subunits. It depends on Mg(2+) as a cofactor.

It localises to the cytoplasm. The enzyme catalyses tRNA(Phe) + L-phenylalanine + ATP = L-phenylalanyl-tRNA(Phe) + AMP + diphosphate + H(+). This chain is Phenylalanine--tRNA ligase beta subunit, found in Ehrlichia ruminantium (strain Welgevonden).